The sequence spans 739 residues: Probable endo-1,3(4)-beta-glucanase An02g00850 (739 aa).

Positions 1 to 24 are cleaved as a signal peptide; that stretch reads MPTSTLLWSVGSLALSSMVLPAAA. In terms of domain architecture, GH16 spans 31-283; that stretch reads ETWKGEDFLT…WAGGVYSTSG (253 aa). 2 N-linked (GlcNAc...) asparagine glycosylation sites follow: Asn59 and Asn74. Glu140 (nucleophile) is an active-site residue. The active-site Proton donor is Glu145. A glycan (N-linked (GlcNAc...) asparagine) is linked at Asn396. Low complexity-rich tracts occupy residues 431–442, 452–499, and 507–522; these read SEATEASNSEGS, TGAS…AGAT, and GASG…SAAA. Positions 431-718 are disordered; it reads SEATEASNSE…TPSTPVFTGG (288 aa). N-linked (GlcNAc...) asparagine glycosylation is found at Asn459 and Asn482. Polar residues predominate over residues 523 to 532; it reads TPSNVSSTGA. N-linked (GlcNAc...) asparagine glycosylation is found at Asn526 and Asn537. Residues 539-548 show a composition bias toward polar residues; it reads SEDSSASSEA. Positions 561-587 are enriched in low complexity; it reads GASAEANGNDSASSNAATASNVSGASA. Asn569, Asn581, Asn592, and Asn620 each carry an N-linked (GlcNAc...) asparagine glycan. Positions 597–641 are enriched in low complexity; that stretch reads ASAGANAGSSAAPSSVSGASAEANGSEGSSSHSSGSQAGAHSYGS. Residues 654-673 are compositionally biased toward polar residues; the sequence is PSSSSHAFATAPSSTGSSRV. Residues 674–713 show a composition bias toward low complexity; it reads PTSAAAANNAAAATQGSSASGSNSGSSGHGSSSATTPSTP. A lipid anchor (GPI-anchor amidated glycine) is attached at Gly717. Residues 718–739 constitute a propeptide, removed in mature form; that stretch reads GANKLTLGASSVLSVLAFALLA.

It belongs to the glycosyl hydrolase 16 family.

It localises to the cell membrane. It catalyses the reaction Endohydrolysis of (1-&gt;3)- or (1-&gt;4)-linkages in beta-D-glucans when the glucose residue whose reducing group is involved in the linkage to be hydrolyzed is itself substituted at C-3.. Mixed-linked glucanase involved in the degradation of complex natural cellulosic substrates. In Aspergillus niger (strain ATCC MYA-4892 / CBS 513.88 / FGSC A1513), this protein is Probable endo-1,3(4)-beta-glucanase An02g00850.